The sequence spans 246 residues: MADS-box transcription factor 14 (246 aa).

The region spanning 1–61 (MGRGKVQLKR…GKLYKYATDS (61 aa)) is the MADS-box domain. Residues 88–178 (QGNWCHEYRK…QKELVEKQKV (91 aa)) form the K-box domain. The segment at 180-199 (KQQVQWDQTQPQTSSSSSSF) is disordered.

In terms of tissue distribution, highly expressed in sterile lemmas, at intermediate levels in stamens, and weakly in lemmas, paleas and carpels.

The protein resides in the nucleus. Its function is as follows. Probable transcription factor. The chain is MADS-box transcription factor 14 (MADS14) from Oryza sativa subsp. indica (Rice).